A 410-amino-acid chain; its full sequence is Protein translocase subunit SecY (410 aa).

Helical transmembrane passes span 61–81 (LSVF…IQIL), 106–126 (ITKY…VLRL), 135–155 (LYFI…VMWL), 170–190 (VIIF…QLFV), 195–215 (FLDF…IVFV), 248–268 (QGGV…DYVI), 289–309 (ILFL…YCSL), 349–369 (LFGS…EFVF), and 373–393 (VFKG…IDLI).

It belongs to the SecY/SEC61-alpha family. As to quaternary structure, component of the plastid Sec protein translocase complex, which is composed of at least SecY and SecE.

It localises to the plastid. Its subcellular location is the chloroplast thylakoid membrane. In terms of biological role, the central subunit of the protein translocation channel SecYE. Consists of two halves formed by TMs 1-5 and 6-10. These two domains form a lateral gate at the front which open onto the bilayer between TMs 2 and 7, and are clamped together by SecE at the back. The channel is closed by both a pore ring composed of hydrophobic SecY resides and a short helix (helix 2A) on the extracellular side of the membrane which forms a plug. This Cyanidium caldarium (Red alga) protein is Protein translocase subunit SecY.